Here is a 527-residue protein sequence, read N- to C-terminus: MSGDQGQAGAKRPIRRALISVYDKSGLIDLARGLHEAGVDIVSTGSTAKTIADKGIPVTPVEFVTGFPEVLDGRVKTLHPHIHAGLLADTRKPEHVEALAKLGIAPFDLVVVNLYPFSETVESGASVDECVEQIDIGGPSMVRAAAKNHPSVAVVVEPNGYDGVLAAVRTGGFTLAERKILASLAFRHTAEYDVAVASWMGSTLAPEEPAQKLPAWVGGTWRRAAVLRYGENPHQQAALYRDATAWPGLAQAEQLHGKEMSYNNYTDADAAWRAAFDHEEICVAIIKHANPCGIAISSVSVADAHRKAHECDPLSAFGGVIATNSSVSVEMAETVADIFTEVIVAPAYEPGAVEILSRKKNIRILLAAQPPTTGTELRPISGGLLLQQRDALDADGDDPVNWTLATGEPADPATLANLKFAWRSCRAVKSNAIVVVADGATVGVGMGQVNRVDAARLAVQRAGDRVRGAIAASDAFFPFPDGLETLTEAGVKAIVHPGGSMRDDVVTEAAAKAGISLYLTGARHFAH.

Residues 8–156 (AGAKRPIRRA…KNHPSVAVVV (149 aa)) form the MGS-like domain.

It belongs to the PurH family.

It catalyses the reaction (6R)-10-formyltetrahydrofolate + 5-amino-1-(5-phospho-beta-D-ribosyl)imidazole-4-carboxamide = 5-formamido-1-(5-phospho-D-ribosyl)imidazole-4-carboxamide + (6S)-5,6,7,8-tetrahydrofolate. The catalysed reaction is IMP + H2O = 5-formamido-1-(5-phospho-D-ribosyl)imidazole-4-carboxamide. It functions in the pathway purine metabolism; IMP biosynthesis via de novo pathway; 5-formamido-1-(5-phospho-D-ribosyl)imidazole-4-carboxamide from 5-amino-1-(5-phospho-D-ribosyl)imidazole-4-carboxamide (10-formyl THF route): step 1/1. The protein operates within purine metabolism; IMP biosynthesis via de novo pathway; IMP from 5-formamido-1-(5-phospho-D-ribosyl)imidazole-4-carboxamide: step 1/1. This Mycobacterium sp. (strain JLS) protein is Bifunctional purine biosynthesis protein PurH.